A 357-amino-acid polypeptide reads, in one-letter code: Neutral protease 2 homolog UREG_02006 (357 aa).

The first 19 residues, 1-19 (MLFSSRFLALAALLGQALA), serve as a signal peptide directing secretion. Positions 20–179 (LPIDDFSQSD…QSAVPTIEKR (160 aa)) are excised as a propeptide. Intrachain disulfides connect cysteine 187/cysteine 259 and cysteine 266/cysteine 284. Histidine 308 provides a ligand contact to Zn(2+). The active site involves glutamate 309. Histidine 312 and aspartate 323 together coordinate Zn(2+).

This sequence belongs to the peptidase M35 family. It depends on Zn(2+) as a cofactor.

Its subcellular location is the secreted. The catalysed reaction is Preferential cleavage of bonds with hydrophobic residues in P1'. Also 3-Asn-|-Gln-4 and 8-Gly-|-Ser-9 bonds in insulin B chain.. In terms of biological role, secreted metalloproteinase that allows assimilation of proteinaceous substrates. Shows high activities on basic nuclear substrates such as histone and protamine. The chain is Neutral protease 2 homolog UREG_02006 from Uncinocarpus reesii (strain UAMH 1704).